The chain runs to 197 residues: Imidazoleglycerol-phosphate dehydratase (197 aa).

Belongs to the imidazoleglycerol-phosphate dehydratase family.

It localises to the cytoplasm. It catalyses the reaction D-erythro-1-(imidazol-4-yl)glycerol 3-phosphate = 3-(imidazol-4-yl)-2-oxopropyl phosphate + H2O. It participates in amino-acid biosynthesis; L-histidine biosynthesis; L-histidine from 5-phospho-alpha-D-ribose 1-diphosphate: step 6/9. The protein is Imidazoleglycerol-phosphate dehydratase of Azorhizobium caulinodans (strain ATCC 43989 / DSM 5975 / JCM 20966 / LMG 6465 / NBRC 14845 / NCIMB 13405 / ORS 571).